Consider the following 429-residue polypeptide: 3-phosphoshikimate 1-carboxyvinyltransferase (429 aa).

3-phosphoshikimate contacts are provided by Lys-11, Ser-12, and Arg-16. Lys-11 provides a ligand contact to phosphoenolpyruvate. 2 residues coordinate phosphoenolpyruvate: Gly-82 and Arg-110. Residues Ser-155, Gln-157, Asp-302, and Lys-329 each contribute to the 3-phosphoshikimate site. Gln-157 provides a ligand contact to phosphoenolpyruvate. Asp-302 functions as the Proton acceptor in the catalytic mechanism. Phosphoenolpyruvate-binding residues include Arg-333 and Arg-385.

This sequence belongs to the EPSP synthase family. As to quaternary structure, monomer.

It localises to the cytoplasm. The catalysed reaction is 3-phosphoshikimate + phosphoenolpyruvate = 5-O-(1-carboxyvinyl)-3-phosphoshikimate + phosphate. It functions in the pathway metabolic intermediate biosynthesis; chorismate biosynthesis; chorismate from D-erythrose 4-phosphate and phosphoenolpyruvate: step 6/7. Functionally, catalyzes the transfer of the enolpyruvyl moiety of phosphoenolpyruvate (PEP) to the 5-hydroxyl of shikimate-3-phosphate (S3P) to produce enolpyruvyl shikimate-3-phosphate and inorganic phosphate. The chain is 3-phosphoshikimate 1-carboxyvinyltransferase from Helicobacter pylori (strain J99 / ATCC 700824) (Campylobacter pylori J99).